The sequence spans 242 residues: Derlin-1 (242 aa).

Residues 1–20 (MSSPAEYYNSLPPISKAYGT) lie on the Cytoplasmic side of the membrane. A helical membrane pass occupies residues 21 to 41 (LCFFATVLCQLQILNPPFLAL). The Lumenal segment spans residues 42 to 55 (YYPFVFKKFQIWRL). The chain crosses the membrane as a helical span at residues 56–76 (FTSFFFLGKFSINFGIRLLMI). The Cytoplasmic segment spans residues 77–94 (ARYGVQLEKGAFEKRTAD). A helical membrane pass occupies residues 95 to 115 (FLWMMIFGAISLLALSAIPFL). Residues 116–157 (DIYFLGVPMVSMLLYVWSREYPNSQISMYGLVQLRSFYLPWA) lie on the Lumenal side of the membrane. The chain crosses the membrane as a helical span at residues 158-178 (MLGLDVIFGSEILPGLLGILV). The Cytoplasmic segment spans residues 179-242 (GHTYYFLSVL…FRGRSYRLSQ (64 aa)).

Belongs to the derlin family. As to expression, seedling shoots and roots.

The protein resides in the endoplasmic reticulum membrane. May be involved in the degradation process of specific misfolded endoplasmic reticulum (ER) luminal proteins. In Oryza sativa subsp. japonica (Rice), this protein is Derlin-1 (DER1).